Here is a 375-residue protein sequence, read N- to C-terminus: Arsenite methyltransferase (375 aa).

The residue at position 335 (Ser335) is a Phosphoserine.

Belongs to the methyltransferase superfamily. Arsenite methyltransferase family.

It localises to the cytoplasm. It is found in the cytosol. The catalysed reaction is arsenic triglutathione + [thioredoxin]-dithiol + S-adenosyl-L-methionine + 2 H2O = methylarsonous acid + [thioredoxin]-disulfide + 3 glutathione + S-adenosyl-L-homocysteine + H(+). It carries out the reaction arsenic triglutathione + 2 [thioredoxin]-dithiol + 2 S-adenosyl-L-methionine + H2O = dimethylarsinous acid + 2 [thioredoxin]-disulfide + 3 glutathione + 2 S-adenosyl-L-homocysteine + 2 H(+). It catalyses the reaction arsenic triglutathione + 3 [thioredoxin]-dithiol + 3 S-adenosyl-L-methionine = trimethylarsine + 3 [thioredoxin]-disulfide + 3 glutathione + 3 S-adenosyl-L-homocysteine + 3 H(+). Functionally, catalyzes the transfer of a methyl group from AdoMet to trivalent arsenicals producing methylated and dimethylated arsenicals. It methylates arsenite to form methylarsonate, Me-AsO(3)H(2), which is reduced by methylarsonate reductase to methylarsonite, Me-As(OH)2. Methylarsonite is also a substrate and it is converted into the much less toxic compound dimethylarsinate (cacodylate), Me(2)As(O)-OH. In Homo sapiens (Human), this protein is Arsenite methyltransferase (AS3MT).